The primary structure comprises 2723 residues: Zinc finger protein 292 (2723 aa).

A C2H2-type 1 zinc finger spans residues 569–591 (YSCPICAKNFNSKETFVPHVTLH). Residues 608-633 (RLGRPPKITTTNENQKTNTVAKQEQR) are disordered. Polar residues predominate over residues 615–629 (ITTTNENQKTNTVAK). Ser654 is modified (phosphoserine). 5 consecutive C2H2-type zinc fingers follow at residues 681–705 (FNCP…VKGH), 722–744 (VICQ…LQMH), 750–774 (YICI…RKEH), 779–803 (AKCM…EAQH), and 807–831 (YTCK…LDDH). Residues 825–834 (EKHLDDHSTP) show a composition bias toward basic and acidic residues. Positions 825 to 860 (EKHLDDHSTPPEKVLPPEAQLNSSGDSIQPSEVNQN) are disordered. The span at 844 to 860 (QLNSSGDSIQPSEVNQN) shows a compositional bias: polar residues. The C2H2-type 7 zinc-finger motif lies at 1098 to 1123 (FSCQVEGCTRTYNSSQSIGKHMKTAH). Lys1117 carries the post-translational modification N6-acetyllysine. Residue Ser1159 is modified to Phosphoserine. Residues 1331–1364 (SSTNAQQSAPEKVKKDRGRGPNGKERKPKHNKRA) form a disordered region. The segment covering 1341–1355 (EKVKKDRGRGPNGKE) has biased composition (basic and acidic residues). The segment at 1375–1397 (FICSRCYRAFTNPRSLGGHLSKR) adopts a C2H2-type 8; degenerate zinc-finger fold. The segment covering 1588–1627 (SFPNSGGPSQNFTSNSSRVSVISGPQNTRSSHLNKKGNSA) has biased composition (polar residues). A disordered region spans residues 1588 to 1634 (SFPNSGGPSQNFTSNSSRVSVISGPQNTRSSHLNKKGNSASKRRKKV). Residues 1827-1854 (QSEVSHKEDQIQEILEGLQKLKLENDLS) adopt a coiled-coil conformation. C2H2-type zinc fingers lie at residues 1902 to 1927 (FVCQ…GKIH) and 1947 to 1972 (FKCV…QLVH). The tract at residues 1986-2023 (RPYGRKSQSENVPASRSTQVKKQLAMTEENKKESQPAL) is disordered. Residues 1994-2006 (SENVPASRSTQVK) show a composition bias toward polar residues. Lys2042 carries the post-translational modification N6-acetyllysine. Residues 2074 to 2103 (NTQTKGRKIRRHKKEKEEKKRKKPVSQSLE) form a disordered region. The segment covering 2078–2097 (KGRKIRRHKKEKEEKKRKKP) has biased composition (basic residues). 4 consecutive C2H2-type zinc fingers follow at residues 2114–2139 (YRCV…QAVH), 2172–2197 (FRCQ…MKLH), 2216–2241 (FPCD…EADH), and 2256–2281 (YKCD…FNKH). Composition is skewed to basic residues over residues 2285 to 2294 (HKAHLIRPRR) and 2312 to 2322 (KSKHRGTKHSR). Residues 2285–2345 (HKAHLIRPRR…KKKNNLENKN (61 aa)) form a disordered region. A C2H2-type 15 zinc finger spans residues 2386–2410 (YPCMIKGCTSVVTSESNIIRHYKCH). Residues 2441 to 2452 (QEGAKNDVKDSD) are compositionally biased toward basic and acidic residues. Disordered stretches follow at residues 2441 to 2480 (QEGA…EKDE), 2530 to 2564 (LKRV…VRKE), and 2606 to 2631 (QKKN…RKNI). Residues 2453–2470 (TCVSESNDNSRTTATVSQ) show a composition bias toward polar residues. Basic and acidic residues predominate over residues 2606-2615 (QKKNTDKDHP).

It belongs to the krueppel C2H2-type zinc-finger protein family.

Its subcellular location is the nucleus. In terms of biological role, may be involved in transcriptional regulation. The polypeptide is Zinc finger protein 292 (ZNF292) (Homo sapiens (Human)).